Consider the following 438-residue polypeptide: Ribosomal protein uS12 methylthiotransferase RimO (438 aa).

The MTTase N-terminal domain occupies methionine 1–glutamate 115. Positions 10, 46, 78, 150, 154, and 157 each coordinate [4Fe-4S] cluster. In terms of domain architecture, Radical SAM core spans lysine 136–asparagine 366. In terms of domain architecture, TRAM spans lysine 369–asparagine 437.

This sequence belongs to the methylthiotransferase family. RimO subfamily. Requires [4Fe-4S] cluster as cofactor.

It localises to the cytoplasm. It carries out the reaction L-aspartate(89)-[ribosomal protein uS12]-hydrogen + (sulfur carrier)-SH + AH2 + 2 S-adenosyl-L-methionine = 3-methylsulfanyl-L-aspartate(89)-[ribosomal protein uS12]-hydrogen + (sulfur carrier)-H + 5'-deoxyadenosine + L-methionine + A + S-adenosyl-L-homocysteine + 2 H(+). In terms of biological role, catalyzes the methylthiolation of an aspartic acid residue of ribosomal protein uS12. This Carboxydothermus hydrogenoformans (strain ATCC BAA-161 / DSM 6008 / Z-2901) protein is Ribosomal protein uS12 methylthiotransferase RimO.